Reading from the N-terminus, the 324-residue chain is MSTTPTIPTIKLNSGYEMPLVGFGCWKVTNATAADQIYNAIKTGYRLFDGAEDYGNEKEVGEGINRAIKEGLVKREELFITSKLWNNFHDPKNVETALNKTLSDLNLDYVDLFLIHFPIAFKFVPIEEKYPPGFYCGDGDNFHYEDVPLLDTWKALEKLVEAGKIKSIGISNFTGALIYDLIRGATIKPAVLQIEHHPYLQQPKLIEYVQKAGIAITGYSSFGPQSFLELESKRALNTPTLFEHETIKLIADKHGKSPAQVLLRWATQRNIAVIPKSNNPERLAQNLSVVDFDLTKDDLDNIAKLDIGLRFNDPWDWDNIPIFV.

Tyr-54 functions as the Proton donor in the catalytic mechanism. His-116 lines the substrate pocket. NAD(+) is bound by residues 171 to 172 (SN), 220 to 229 (SSFGPQSFLE), and 276 to 286 (KSNNPERLAQN).

The protein belongs to the aldo/keto reductase family.

It catalyses the reaction xylitol + NAD(+) = D-xylose + NADH + H(+). It carries out the reaction xylitol + NADP(+) = D-xylose + NADPH + H(+). Its pathway is carbohydrate metabolism; D-xylose degradation. Functionally, reduces D-xylose into xylitol. Has a preference for NADPH, but can also utilize NADH as cosubstrate. The chain is NAD(P)H-dependent D-xylose reductase I,II (xyrA) from Candida tropicalis (Yeast).